The following is a 1335-amino-acid chain: Xanthine dehydrogenase/oxidase (1335 aa).

The region spanning 7–94 (DELVFFVNGK…HVAVTTVEGI (88 aa)) is the 2Fe-2S ferredoxin-type domain. [2Fe-2S] cluster contacts are provided by C46, C51, C54, C76, C115, C118, C150, and C152. The region spanning 231 to 416 (FEGERVTWIQ…VSIVIPYSRK (186 aa)) is the FAD-binding PCMH-type domain. Residues 259-266 (LVVGNTEI), F339, 349-353 (SIGGN), D362, L406, and K424 each bind FAD. C538 and C995 are oxidised to a cystine. Q770 and F801 together coordinate Mo-molybdopterin. Positions 805 and 883 each coordinate substrate. R915 provides a ligand contact to Mo-molybdopterin. Substrate contacts are provided by F917 and T1013. Residue A1082 participates in Mo-molybdopterin binding. The Proton acceptor role is filled by E1264.

This sequence belongs to the xanthine dehydrogenase family. As to quaternary structure, homodimer. Interacts with BTN1A1. It depends on FAD as a cofactor. The cofactor is Mo-molybdopterin. [2Fe-2S] cluster is required as a cofactor. Subject to partial proteolysis; this alters the enzyme from the dehydrogenase form (D) to the oxidase form (O). Post-translationally, contains sulfhydryl groups that are easily oxidized (in vitro); this alters the enzyme from the dehydrogenase form (D) to the oxidase form (O).

The protein localises to the cytoplasm. It localises to the peroxisome. Its subcellular location is the secreted. The enzyme catalyses xanthine + NAD(+) + H2O = urate + NADH + H(+). The catalysed reaction is hypoxanthine + NAD(+) + H2O = xanthine + NADH + H(+). It catalyses the reaction xanthine + O2 + H2O = urate + H2O2. Its activity is regulated as follows. Can be converted from the dehydrogenase form (D) to the oxidase form (O) irreversibly by proteolysis or reversibly through the oxidation of sulfhydryl groups. In terms of biological role, key enzyme in purine degradation. Catalyzes the oxidation of hypoxanthine to xanthine. Catalyzes the oxidation of xanthine to uric acid. Contributes to the generation of reactive oxygen species. The protein is Xanthine dehydrogenase/oxidase (Xdh) of Mus musculus (Mouse).